Reading from the N-terminus, the 187-residue chain is Auxin-binding protein T92 (187 aa).

The N-terminal stretch at 1-20 (MARHIIILVAVFWFATAEAS) is a signal peptide. Residues Cys-22 and Cys-177 are joined by a disulfide bond. Residues His-78, His-80, and Glu-84 each coordinate Zn(2+). Asn-117 carries an N-linked (GlcNAc...) asparagine glycan. Position 128 (His-128) interacts with Zn(2+). The Prevents secretion from ER motif lies at 184–187 (KDEL).

As to quaternary structure, homodimer.

The protein resides in the endoplasmic reticulum lumen. Functionally, this is probably a receptor for the plant hormone auxin. In Nicotiana tabacum (Common tobacco), this protein is Auxin-binding protein T92 (T92).